A 138-amino-acid chain; its full sequence is Mediator of RNA polymerase II transcription subunit 22 (138 aa).

The stretch at 13-40 (LKSYNSRLKEDIRSMRENFEEIIRLAKG) forms a coiled coil.

It belongs to the Mediator complex subunit 22 family. Component of the Mediator complex.

Its subcellular location is the nucleus. Functionally, component of the Mediator complex, a coactivator involved in the regulated transcription of nearly all RNA polymerase II-dependent genes. Mediator functions as a bridge to convey information from gene-specific regulatory proteins to the basal RNA polymerase II transcription machinery. Mediator is recruited to promoters by direct interactions with regulatory proteins and serves as a scaffold for the assembly of a functional preinitiation complex with RNA polymerase II and the general transcription factors. The sequence is that of Mediator of RNA polymerase II transcription subunit 22 (MED22) from Anopheles gambiae (African malaria mosquito).